Here is a 430-residue protein sequence, read N- to C-terminus: Probable aspartic-type endopeptidase TRV_06366 (430 aa).

The first 17 residues, 1-17 (MHVSTLLVAVLLPLALS), serve as a signal peptide directing secretion. Residues 18-87 (KPTPRKKTSS…SKATAGSGKE (70 aa)) constitute a propeptide, activation peptide. The interval 61–104 (HEMEGYHPQPISKLPGNSKATAGSGKEGVESQDEKGEVVNNPTD) is disordered. The span at 87 to 104 (EGVESQDEKGEVVNNPTD) shows a compositional bias: basic and acidic residues. Residues 109–427 (FLSPVTIGGQ…DQRGPSISLA (319 aa)) enclose the Peptidase A1 domain. Asp125 is a catalytic residue. An N-linked (GlcNAc...) asparagine glycan is attached at Asn306. Asp314 is an active-site residue.

Belongs to the peptidase A1 family.

Its subcellular location is the secreted. Functionally, probable secreted aspartic-type endopeptidase which contributes to virulence. The sequence is that of Probable aspartic-type endopeptidase TRV_06366 from Trichophyton verrucosum (strain HKI 0517).